Reading from the N-terminus, the 140-residue chain is Pro-vaccinia growth factor (140 aa).

Positions 1-18 (MSMKYLMLLFAAMIIRSF) are cleaved as a signal peptide. Residues 19-100 (ADSGNAIETT…SENPNTTTSY (82 aa)) lie on the Extracellular side of the membrane. N34 carries an N-linked (GlcNAc...) asparagine; by host glycan. The 41-residue stretch at 41-81 (AIRLCGPEGDGYCLHGDCIHARDIDGMYCRCSHGYTGIRCQ) folds into the EGF-like domain. Cystine bridges form between C45–C58, C53–C69, and C71–C80. A glycan (N-linked (GlcNAc...) asparagine; by host) is linked at N95. The chain crosses the membrane as a helical span at residues 101 to 121 (IPSPGIVLVLVGIIIITCCSL). At 122–140 (SVYRFTRRTKLPIQDMVVP) the chain is on the cytoplasmic side.

Belongs to the orthopoxvirus OPG019 family. Vaccinia growth factor interacts with host EGFR and promotes EGFR dimerization.

The protein localises to the host membrane. It localises to the secreted. In terms of biological role, stimulates cellular proliferation (hyperplasia)and mobility around infected cells to promote rapid and efficient spread of infection. This effect is beneficial for virus replication in vivo, because poxviruses replicate possibly better in proliferating cells than in quiescent cells. Acts by binding host EGFR, inducing its dimerization, autophosphorylation and leading to activation of several cellular pathways regulating cell proliferation or cell survival. The activation by host EGFR of mitogen activated protein kinases (MAPK) and extracellular-signal regulated kinases (ERK) are essential for the positive effect of vaccinia growth factor on poxvirus virulence in vivo. In Vaccinia virus (strain L-IVP) (VACV), this protein is Pro-vaccinia growth factor (OPG019).